A 251-amino-acid polypeptide reads, in one-letter code: MRNICLLIAFDGTDYSGWQKQHHANTIQGEIEARLKRLSVKEISLHGAGRTDAGVHADGMTAHFHTDTRLTCNDFQRALNRMLPGAIRILQVREMADDFHARFAATGKEYHYRLFTGGVIPPQKRLYMLHQEKPIDQEAMQKCLQIIIGTHDFSSFENTGSRDKTRTGGKGAVRTILEARYEQFEEDSWHFVFIGDGFLRNMVRNIVGSILEVGRGKESVEWFEQALKEKDRNAAGPTAPAHGLKLFQVFY.

Asp-52 functions as the Nucleophile in the catalytic mechanism. Tyr-110 contributes to the substrate binding site.

Belongs to the tRNA pseudouridine synthase TruA family. As to quaternary structure, homodimer.

The catalysed reaction is uridine(38/39/40) in tRNA = pseudouridine(38/39/40) in tRNA. In terms of biological role, formation of pseudouridine at positions 38, 39 and 40 in the anticodon stem and loop of transfer RNAs. The protein is tRNA pseudouridine synthase A 1 of Desulfotalea psychrophila (strain LSv54 / DSM 12343).